The primary structure comprises 273 residues: Dermonecrotic toxin LhSicTox-alphaIA1ii (273 aa).

Histidine 5 is an active-site residue. Residues glutamate 25 and aspartate 27 each contribute to the Mg(2+) site. The Nucleophile role is filled by histidine 41. Intrachain disulfides connect cysteine 45–cysteine 51 and cysteine 47–cysteine 190. Aspartate 85 provides a ligand contact to Mg(2+).

This sequence belongs to the arthropod phospholipase D family. Class II subfamily. Mg(2+) serves as cofactor. Expressed by the venom gland.

Its subcellular location is the secreted. The catalysed reaction is an N-(acyl)-sphingosylphosphocholine = an N-(acyl)-sphingosyl-1,3-cyclic phosphate + choline. The enzyme catalyses an N-(acyl)-sphingosylphosphoethanolamine = an N-(acyl)-sphingosyl-1,3-cyclic phosphate + ethanolamine. It catalyses the reaction a 1-acyl-sn-glycero-3-phosphocholine = a 1-acyl-sn-glycero-2,3-cyclic phosphate + choline. It carries out the reaction a 1-acyl-sn-glycero-3-phosphoethanolamine = a 1-acyl-sn-glycero-2,3-cyclic phosphate + ethanolamine. Its function is as follows. Dermonecrotic toxins cleave the phosphodiester linkage between the phosphate and headgroup of certain phospholipids (sphingolipid and lysolipid substrates), forming an alcohol (often choline) and a cyclic phosphate. This toxin acts on sphingomyelin (SM). It may also act on ceramide phosphoethanolamine (CPE), lysophosphatidylcholine (LPC) and lysophosphatidylethanolamine (LPE), but not on lysophosphatidylserine (LPS), and lysophosphatidylglycerol (LPG). It acts by transphosphatidylation, releasing exclusively cyclic phosphate products as second products. Induces dermonecrosis, hemolysis, increased vascular permeability, edema, inflammatory response, and platelet aggregation. The sequence is that of Dermonecrotic toxin LhSicTox-alphaIA1ii from Loxosceles hirsuta (Recluse spider).